Here is a 616-residue protein sequence, read N- to C-terminus: Protein cereblon (616 aa).

Disordered regions lie at residues 1–39, 63–137, and 182–220; these read MDEE…DDSV, FGPS…AMPR, and SQER…DIDM. A compositionally biased stretch (low complexity) spans 11–32; sequence AQEQEVAGSAGEAAAGPSGAEV. Residues 96-107 are compositionally biased toward acidic residues; the sequence is SEEDIVLDDGTE. Basic and acidic residues predominate over residues 183–192; the sequence is QERRRSRNSD. The segment covering 194 to 203 has biased composition (acidic residues); sequence VSPEAEDDEL. Over residues 206 to 215 the composition is skewed to pro residues; the sequence is HPPPPPPRPP. The Lon N-terminal domain occupies 257–482; it reads HMLIFLHQYI…LIGGILKEET (226 aa). The CULT domain maps to 481 to 590; sequence ETLFYCRYCN…LAGSSVRIGK (110 aa). 4 residues coordinate Zn(2+): Cys-486, Cys-489, Cys-555, and Cys-558.

The protein belongs to the CRBN family. As to quaternary structure, likely a component of a DCX (DDB1-CUL4-X-box) protein ligase complex. May interact with pic/DDB1. In terms of processing, ubiquitinated.

The protein localises to the nucleus. The protein operates within protein modification; protein ubiquitination. Its function is as follows. Substrate recognition component of a DCX (DDB1-CUL4-X-box) E3 protein ligase complex that mediates the ubiquitination and subsequent proteasomal degradation of target proteins. Has an essential role in mediating growth by negatively regulating insulin signaling. It also has a role in maintaining presynaptic function in the neuromuscular junction synapses of third-instar larvae. This Drosophila persimilis (Fruit fly) protein is Protein cereblon.